The primary structure comprises 891 residues: DNA mismatch repair protein MutS (891 aa).

Position 632–639 (632–639) interacts with ATP; it reads GPNMAGKS.

This sequence belongs to the DNA mismatch repair MutS family.

Functionally, this protein is involved in the repair of mismatches in DNA. It is possible that it carries out the mismatch recognition step. This protein has a weak ATPase activity. In Rhodopirellula baltica (strain DSM 10527 / NCIMB 13988 / SH1), this protein is DNA mismatch repair protein MutS.